Reading from the N-terminus, the 62-residue chain is Short neurotoxin C (62 aa).

The span at 1–16 (RRCFNQQSSQPQTNKS) shows a compositional bias: polar residues. Residues 1 to 22 (RRCFNQQSSQPQTNKSCPPGEN) form a disordered region. 4 disulfides stabilise this stretch: Cys3–Cys24, Cys17–Cys41, Cys43–Cys54, and Cys55–Cys60.

It belongs to the three-finger toxin family. Short-chain subfamily. Type I alpha-neurotoxin sub-subfamily. In terms of tissue distribution, expressed by the venom gland.

Its subcellular location is the secreted. Its function is as follows. Binds to muscle nicotinic acetylcholine receptor (nAChR) and inhibit acetylcholine from binding to the receptor, thereby impairing neuromuscular transmission. The protein is Short neurotoxin C of Laticauda laticaudata (Blue-ringed sea krait).